A 144-amino-acid polypeptide reads, in one-letter code: Large ribosomal subunit protein uL15 (144 aa).

Positions 1–56 are disordered; it reads MELNTLAPAPGAKSSKKRVGRGIGSGLGKTGGRGHKGQKSRSGGSVKPGFEGGQMP. The segment covering 21–31 has biased composition (gly residues); sequence RGIGSGLGKTG.

It belongs to the universal ribosomal protein uL15 family. In terms of assembly, part of the 50S ribosomal subunit.

Binds to the 23S rRNA. The protein is Large ribosomal subunit protein uL15 of Idiomarina loihiensis (strain ATCC BAA-735 / DSM 15497 / L2-TR).